Reading from the N-terminus, the 166-residue chain is Cytochrome b (166 aa).

Transmembrane regions (helical) follow at residues 15–35 (FKDI…VLIN), 77–97 (LGGV…PFYN), 109–129 (INQI…WIGA), and 136–156 (YVLL…INPL).

This sequence belongs to the cytochrome b family. As to quaternary structure, the main subunits of complex b-c1 are: cytochrome b, cytochrome c1 and the Rieske protein. The cofactor is heme.

It localises to the mitochondrion inner membrane. Its function is as follows. Component of the ubiquinol-cytochrome c reductase complex (complex III or cytochrome b-c1 complex) that is part of the mitochondrial respiratory chain. The b-c1 complex mediates electron transfer from ubiquinol to cytochrome c. Contributes to the generation of a proton gradient across the mitochondrial membrane that is then used for ATP synthesis. This chain is Cytochrome b (mt:Cyt-b), found in Drosophila subobscura (Fruit fly).